The chain runs to 112 residues: uncharacterized protein (112 aa).

This is an uncharacterized protein from Caenorhabditis elegans.